Consider the following 1124-residue polypeptide: Transient-receptor-potential-like protein (1124 aa).

Positions 1-24 (MGRKKKLPTGVSSGVSHASSAPKS) are disordered. Residues 1-340 (MGRKKKLPTG…GFRRKSIVDK (340 aa)) lie on the Cytoplasmic side of the membrane. Over residues 10-21 (GVSSGVSHASSA) the composition is skewed to low complexity. ANK repeat units follow at residues 40-69 (LEEK…RHQH), 78-107 (LGRR…ETKD), and 152-181 (PDIT…AVPV). A helical transmembrane segment spans residues 341–361 (VICIAQVAVLFPLYCLIYMCA). At 362–373 (PNCRTGQLMRKP) the chain is on the extracellular side. A helical transmembrane segment spans residues 374–394 (FMKFLIHASSYLFFLFILILV). At 395–431 (SQRADDDFVRIFGTTRMKKELAEQELRQRGQTPSKLE) the chain is on the cytoplasmic side. The chain crosses the membrane as a helical span at residues 432 to 452 (LIVVMYVIGFVWEEVQEIFAV). Topologically, residues 453–512 (GMKSYLRNMWNFIDFLRNSLYVSVMCLRAFAYIQQATEIARDPQMAYIPREKWHDFDPQL) are extracellular. The chain crosses the membrane as a helical span at residues 513–533 (IAEGLFAAANVFSALKLVHLF). The Cytoplasmic portion of the chain corresponds to 534-548 (SINPHLGPLQISLGR). The helical transmembrane segment at 549–569 (MVIDIVKFFFIYTLVLFAFAC) threads the bilayer. Residues 570–645 (GLNQLLWYFA…GIKSYTRFWG (76 aa)) are Extracellular-facing. Residues 646 to 666 (LLMFGSYSVINVIVLLNLLIA) form a helical membrane-spanning segment. Over 667-1124 (MMSNSYAMID…TSPQRPKHRN (458 aa)) the chain is Cytoplasmic. Calmodulin-binding stretches follow at residues 710–728 (SVKW…IDRQ) and 853–895 (IPSK…SQIG). 2 disordered regions span residues 978 to 1013 (RAMA…GVSH) and 1031 to 1124 (LIAN…KHRN). Positions 1035 to 1063 (SAPSAPTAPPKKSAPTAPTPTYKPTTHAP) are enriched in low complexity. Basic and acidic residues-rich tracts occupy residues 1069-1081 (GNRE…DGVR) and 1090-1106 (HVVD…RDNV). Residues 1107–1118 (SDISSIASTSPQ) show a composition bias toward polar residues.

This sequence belongs to the transient receptor (TC 1.A.4) family. STrpC subfamily. In terms of assembly, forms heteromultimers with Trpgamma and, to a lower extent, with trp. Interacts with Fkbp59 in vivo and is found in the inaD signaling complex. In terms of tissue distribution, expressed predominantly in the rhabdomeres of photoreceptor cells.

It localises to the membrane. Its subcellular location is the cell projection. The protein localises to the rhabdomere membrane. Functionally, a light-sensitive calcium channel that is required for inositide-mediated Ca(2+) entry in the retina during phospholipase C (PLC)-mediated phototransduction. Required for vision in the dark and in dim light. Binds calmodulin. Trp and trpl act together in the light response, although it is unclear whether as heteromultimers or distinct units. Also forms a functional cation channel with Trpgamma. Activated by fatty acids, metabolic stress, inositols and GTP-binding proteins. The chain is Transient-receptor-potential-like protein (trpl) from Drosophila melanogaster (Fruit fly).